The chain runs to 855 residues: DNA mismatch repair protein MutS (855 aa).

616-623 (GPNMGGKS) lines the ATP pocket.

This sequence belongs to the DNA mismatch repair MutS family.

Functionally, this protein is involved in the repair of mismatches in DNA. It is possible that it carries out the mismatch recognition step. This protein has a weak ATPase activity. The polypeptide is DNA mismatch repair protein MutS (Salmonella paratyphi C (strain RKS4594)).